The chain runs to 122 residues: Flagellar protein FliT (122 aa).

The segment at 1–50 (MTSTVEFINRWQRIALLSQSLLELAQRGEWDLLLQQEVSYLQRIETVMEK) is required for homodimerization. The tract at residues 60–98 (IQDMVAGYIKQTLDNEQLLKGLLQQRLDELSSLIGQSTR) is fliD binding.

It belongs to the FliT family. In terms of assembly, homodimer. Interacts with FliD and FlhC.

It is found in the cytoplasm. The protein localises to the cytosol. Dual-function protein that regulates the transcription of class 2 flagellar operons and that also acts as an export chaperone for the filament-capping protein FliD. As a transcriptional regulator, acts as an anti-FlhDC factor; it directly binds FlhC, thus inhibiting the binding of the FlhC/FlhD complex to class 2 promoters, resulting in decreased expression of class 2 flagellar operons. As a chaperone, effects FliD transition to the membrane by preventing its premature polymerization, and by directing it to the export apparatus. The sequence is that of Flagellar protein FliT from Salmonella paratyphi A (strain AKU_12601).